Here is a 150-residue protein sequence, read N- to C-terminus: UPF0756 membrane protein YPN_1328 (150 aa).

4 helical membrane-spanning segments follow: residues 16-36 (ALGI…LIAI), 51-71 (YGLT…IASG), 88-108 (ILAI…VSLM), and 114-134 (VVAG…GVPV).

It belongs to the UPF0756 family.

The protein resides in the cell membrane. This Yersinia pestis bv. Antiqua (strain Nepal516) protein is UPF0756 membrane protein YPN_1328.